Reading from the N-terminus, the 257-residue chain is Protein LigF (257 aa).

In terms of domain architecture, GST N-terminal spans 1 to 82; the sequence is MTLKLYSFGP…YLEDVFPESG (82 aa). Residues 89–257 form the GST C-terminal domain; that stretch reads DPFKRAEMRV…LLKRQNEKVA (169 aa).

The protein belongs to the GST superfamily.

Its function is as follows. Lignin degradation enzyme. This is Protein LigF (ligF) from Sphingobium sp. (strain NBRC 103272 / SYK-6).